The following is a 756-amino-acid chain: NADP-dependent malic enzyme (756 aa).

Residues Met1–Ser428 are malic enzyme. Tyr39 functions as the Proton donor in the catalytic mechanism. The active-site Proton acceptor is Lys94. Residues Glu136, Asp137, and Asp162 each coordinate a divalent metal cation. NADP(+) is bound by residues Ala195 to Ala198, Asn288, and Asn320. Positions Leu429–Glu756 are phosphate acetyltransferase.

It in the N-terminal section; belongs to the malic enzymes family. The protein in the C-terminal section; belongs to the phosphate acetyltransferase and butyryltransferase family. Requires Mg(2+) as cofactor. Mn(2+) is required as a cofactor.

The enzyme catalyses (S)-malate + NADP(+) = pyruvate + CO2 + NADPH. It carries out the reaction oxaloacetate + H(+) = pyruvate + CO2. The sequence is that of NADP-dependent malic enzyme (maeB) from Haemophilus influenzae (strain ATCC 51907 / DSM 11121 / KW20 / Rd).